Consider the following 401-residue polypeptide: UDP-GlcNAc:betaGal beta-1,3-N-acetylglucosaminyltransferase 9 (401 aa).

The Cytoplasmic portion of the chain corresponds to 1–10; sequence MRRRLRLRRE. The helical; Signal-anchor for type II membrane protein transmembrane segment at 11 to 31 threads the bilayer; sequence ALLTLLLGATLGLLLYAQQEG. The Lumenal segment spans residues 32-401; it reads AAPTTSAPRA…VPAGPFQWGP (370 aa). Residues 33-85 form a disordered region; it reads APTTSAPRAQGRAAPGPTPGLRVFQAPDTGAAPPAYEGDTPEPPTPTGPFDFG. A compositionally biased stretch (low complexity) spans 38 to 47; sequence APRAQGRAAP.

This sequence belongs to the glycosyltransferase 31 family.

The protein resides in the golgi apparatus membrane. This is UDP-GlcNAc:betaGal beta-1,3-N-acetylglucosaminyltransferase 9 from Bos taurus (Bovine).